The following is a 748-amino-acid chain: Spidroin-1 (748 aa).

A run of 25 repeats spans residues 1–25 (QGAG…GGQG), 26–38 (AGQG…GGQG), 39–66 (AGQG…GSQG), 67–96 (AGRG…GSQG), 97–130 (AGRG…GNQG), 131–158 (AGRG…GSQG), 159–191 (AGRG…GGQG), 192–204 (AGQG…GSQG), 205–235 (AGRG…GGQG), 236–262 (AGQG…GSQG), 263–292 (AGRG…GGQG), 293–305 (AGQG…GSQG), 306–333 (AGRG…GGQG), 334–360 (AGQG…GSQG), 361–394 (AGRG…GSQG), 395–424 (AGRG…GNQG), 425–458 (AGRG…GNQG), 459–485 (AGRG…GSQG), 486–512 (AGRG…RGQG), 513–525 (AGQG…GSQG), 526–555 (SGRG…GGQG), 556–582 (AGQG…GSQG), 583–612 (AGRG…GGQG), 613–642 (VGRG…VGSG), and 643–655 (ASAA…RLSS). A 25 X approximate tandem repeats region spans residues 1–655 (QGAGAAAAAA…ASAAASRLSS (655 aa)).

This sequence belongs to the silk fibroin family. As to quaternary structure, major subunit, with spidroin 2, of the dragline silk.

The protein localises to the secreted. It localises to the extracellular space. Its function is as follows. Spiders' major ampullate silk possesses unique characteristics of strength and elasticity. Fibroin consists of pseudocrystalline regions of antiparallel beta-sheet interspersed with elastic amorphous segments. The protein is Spidroin-1 of Trichonephila clavipes (Golden silk orbweaver).